A 392-amino-acid polypeptide reads, in one-letter code: uncharacterized protein (392 aa).

The signal sequence occupies residues 1-19 (MRRIVCPPVLFLSASLLTG). Cys20 carries N-palmitoyl cysteine lipidation. Residue Cys20 is the site of S-diacylglycerol cysteine attachment. Positions 148–173 (SSGSSGGGGGGSGSSSDGGIKNGSDE) are disordered. Gly residues predominate over residues 151-160 (SSGGGGGGSG).

The protein belongs to the TP013X lipoprotein family.

The protein resides in the cell membrane. This is an uncharacterized protein from Treponema pallidum (strain Nichols).